The chain runs to 604 residues: Rhotekin-2 (604 aa).

The REM-1 domain occupies 1–74; sequence MEGQLLRGLA…LQKSKEEIAN (74 aa). A coiled-coil region spans residues 53–79; that stretch reads VCSARIQAYTAELQKSKEEIANQTGAR. One can recognise a PH domain in the interval 281–387; that stretch reads ADAFAGFLNE…WMGAFRQHFF (107 aa). Positions 481–590 are disordered; that stretch reads LSPIGEPAPD…PVPVPRQKSI (110 aa). Positions 514–527 are enriched in polar residues; that stretch reads GRANQSKDSATQAG. The span at 529–543 shows a compositional bias: low complexity; the sequence is SGASSSPSDPRLSPP.

Its function is as follows. May play an important role in lymphopoiesis. In Mus musculus (Mouse), this protein is Rhotekin-2 (Rtkn2).